A 57-amino-acid chain; its full sequence is UPF0391 membrane protein BRADO5617 (57 aa).

Transmembrane regions (helical) follow at residues 1–21 (MLGW…LGFG) and 30–50 (IAKI…VVGL).

It belongs to the UPF0391 family.

It is found in the cell membrane. The chain is UPF0391 membrane protein BRADO5617 from Bradyrhizobium sp. (strain ORS 278).